A 1724-amino-acid polypeptide reads, in one-letter code: Protein mono-ADP-ribosyltransferase PARP4 (1724 aa).

The BRCT domain maps to 1 to 94 (MVMGIFANCI…RLLDVKNYDP (94 aa)). Positions 19–25 (PQQQKKK) match the Nuclear localization signal motif. The tract at residues 97-123 (PLDITPPPDQKASSSEVKTEGLCPDSA) is disordered. Phosphothreonine is present on residues threonine 101 and threonine 333. The PARP alpha-helical domain maps to 242–370 (SEQLQALLLE…ETNLSKPNPP (129 aa)). In terms of domain architecture, PARP catalytic spans 369–573 (PPSLAKYRAL…FSMPGDQIKD (205 aa)). The 129-residue stretch at 607–735 (SSTKAGLQDA…KVLIKITYIT (129 aa)) folds into the VIT domain. One can recognise a VWFA domain in the interval 876-1046 (EVIICLDCSS…KQIEDQMTRL (171 aa)). At serine 1236 the chain carries Phosphoserine. A Nuclear localization signal motif is present at residues 1237-1249 (KRKHRKIPFSKRK). Position 1335 is a phosphoserine (serine 1335). The disordered stretch occupies residues 1408–1452 (SAQSAPLQHPGGFTTRPSAGTFPELDSPQLHFSLPTDPDPIRGFG). Arginine 1476 is modified (asymmetric dimethylarginine). A Phosphoserine modification is found at serine 1504. Residues 1562 to 1724 (VCIQHWQDAV…LHRVLHYSQG (163 aa)) are interaction with the major vault protein.

This sequence belongs to the ARTD/PARP family. In terms of assembly, component of the vault ribonucleoprotein particle, at least composed of MVP, PARP4 and one or more vault RNAs (vRNAs). Interacts with TEP1. As to expression, widely expressed; the highest levels are in the kidney; also detected in heart, placenta, lung, liver, skeletal muscle, spleen, leukocytes and pancreas.

The protein resides in the cytoplasm. The protein localises to the nucleus. Its subcellular location is the cytoskeleton. It is found in the spindle. It catalyses the reaction L-aspartyl-[protein] + NAD(+) = 4-O-(ADP-D-ribosyl)-L-aspartyl-[protein] + nicotinamide. It carries out the reaction L-glutamyl-[protein] + NAD(+) = 5-O-(ADP-D-ribosyl)-L-glutamyl-[protein] + nicotinamide. Mono-ADP-ribosyltransferase that mediates mono-ADP-ribosylation of target proteins. The polypeptide is Protein mono-ADP-ribosyltransferase PARP4 (Homo sapiens (Human)).